Consider the following 518-residue polypeptide: Tropomyosin-1, isoforms 33/34 (518 aa).

A coiled-coil region spans residues 14–267; it reads DKDGALERAL…DDLIVEKERY (254 aa). Disordered regions lie at residues 101-125 and 288-518; these read RSEERLGSATAKLSEASQAADESER and FWNP…APPA. A compositionally biased stretch (pro residues) spans 293–305; that stretch reads NPKPPTPKLPTPT. Over residues 318–348 the composition is skewed to low complexity; sequence AAEAAAAAEAEAAEAAAAAGEAGPDGAPAAP. Pro residues-rich tracts occupy residues 357–374 and 394–405; these read EPTPPKEPTPPPPPPPPF and EPPPPGSEPEPV. The segment covering 406–518 has biased composition (low complexity); the sequence is PAAEGEAAPA…AAAEGEAPPA (113 aa).

This sequence belongs to the tropomyosin family. As to quaternary structure, homodimer. Both isoforms are only expressed in indirect flight muscles.

It is found in the cytoplasm. Its subcellular location is the cytoskeleton. Tropomyosin, in association with the troponin complex, plays a central role in the calcium dependent regulation of muscle contraction. The sequence is that of Tropomyosin-1, isoforms 33/34 (Tm1) from Drosophila melanogaster (Fruit fly).